The sequence spans 271 residues: Mannosyl-3-phosphoglycerate phosphatase (271 aa).

Asp-13 (nucleophile) is an active-site residue. Residues Asp-13, Asp-15, and Asp-214 each contribute to the Mg(2+) site.

The protein belongs to the HAD-like hydrolase superfamily. MPGP family. The cofactor is Mg(2+).

The protein localises to the cytoplasm. It carries out the reaction 2-O-(alpha-D-mannosyl)-3-phosphoglycerate + H2O = (2R)-2-O-(alpha-D-mannosyl)-glycerate + phosphate. This Escherichia coli (strain K12 / DH10B) protein is Mannosyl-3-phosphoglycerate phosphatase.